The sequence spans 319 residues: Ferrochelatase (319 aa).

Positions 193 and 274 each coordinate Fe cation.

This sequence belongs to the ferrochelatase family.

It is found in the cytoplasm. The enzyme catalyses heme b + 2 H(+) = protoporphyrin IX + Fe(2+). Its pathway is porphyrin-containing compound metabolism; protoheme biosynthesis; protoheme from protoporphyrin-IX: step 1/1. In terms of biological role, catalyzes the ferrous insertion into protoporphyrin IX. The chain is Ferrochelatase from Actinobacillus pleuropneumoniae serotype 3 (strain JL03).